The following is a 482-amino-acid chain: Anthocyanin 3'-O-beta-glucosyltransferase (482 aa).

H16 acts as the Proton acceptor in catalysis. H16 lines the an anthocyanidin pocket. The active-site Charge relay is the D119. A349, Q351, H366, W369, N370, S371, and E374 together coordinate UDP-alpha-D-glucose. A389 contacts an anthocyanidin. Residues E390 and Q391 each coordinate UDP-alpha-D-glucose.

This sequence belongs to the UDP-glycosyltransferase family. In terms of processing, the N-terminus is blocked. As to expression, abundant in petals and barely detected in leaves.

The catalysed reaction is delphinidin 3,5-bis-O-beta-D-glucoside + UDP-alpha-D-glucose = delphinidin 3,3',5-tri-O-beta-D-glucoside + UDP + H(+). In terms of biological role, specifically glucosylates the 3'-hydroxy group of delphinidin 3,5-di-O-glucoside to produce gentiodelphin. Shows a strict specificity for UDP-glucose as donor. This chain is Anthocyanin 3'-O-beta-glucosyltransferase, found in Gentiana triflora (Clustered gentian).